A 309-amino-acid polypeptide reads, in one-letter code: Olfactory receptor 1A1 (309 aa).

The Extracellular segment spans residues 1 to 25 (MRENNQSSTLEFILLGVTGQQEQED). A glycan (N-linked (GlcNAc...) asparagine) is linked at N5. A helical membrane pass occupies residues 26–49 (FFYILFLFIYPITLIGNLLIVLAI). Residues 50–57 (CSDVRLHN) lie on the Cytoplasmic side of the membrane. A helical membrane pass occupies residues 58–79 (PMYFLLANLSLVDIFFSSVTIP). Over 80–100 (KMLANHLLGSKSISFGGCLTQ) the chain is Extracellular. Cysteines 97 and 189 form a disulfide. A helical transmembrane segment spans residues 101–120 (MYFMIALGNTDSYILAAMAY). The Cytoplasmic segment spans residues 121 to 139 (DRAVAISRPLHYTTIMSPR). The helical transmembrane segment at 140-158 (SCIWLIAGSWVIGNANALP) threads the bilayer. Over 159–195 (HTLLTASLSFCGNQEVANFYCDITPLLKLSCSDIHFH) the chain is Extracellular. A helical transmembrane segment spans residues 196–218 (VKMMYLGVGIFSVPLLCIIVSYI). Over 219 to 235 (RVFSTVFQVPSTKGVLK) the chain is Cytoplasmic. The helical transmembrane segment at 236-258 (AFSTCGSHLTVVSLYYGTVMGTY) threads the bilayer. The Extracellular segment spans residues 259–270 (FRPLTNYSLKDA). N-linked (GlcNAc...) asparagine glycosylation occurs at N264. Residues 271-290 (VITVMYTAVTPMLNPFIYSL) traverse the membrane as a helical segment. At 291 to 309 (RNRDMKAALRKLFNKRISS) the chain is on the cytoplasmic side.

It belongs to the G-protein coupled receptor 1 family.

It localises to the cell membrane. Its function is as follows. Odorant receptor. In Homo sapiens (Human), this protein is Olfactory receptor 1A1 (OR1A1).